A 101-amino-acid chain; its full sequence is Urease subunit beta (101 aa).

Belongs to the urease beta subunit family. Heterotrimer of UreA (gamma), UreB (beta) and UreC (alpha) subunits. Three heterotrimers associate to form the active enzyme.

Its subcellular location is the cytoplasm. The enzyme catalyses urea + 2 H2O + H(+) = hydrogencarbonate + 2 NH4(+). It functions in the pathway nitrogen metabolism; urea degradation; CO(2) and NH(3) from urea (urease route): step 1/1. The chain is Urease subunit beta from Sinorhizobium fredii (strain NBRC 101917 / NGR234).